A 75-amino-acid polypeptide reads, in one-letter code: Small ribosomal subunit protein bS18 (75 aa).

Belongs to the bacterial ribosomal protein bS18 family. Part of the 30S ribosomal subunit. Forms a tight heterodimer with protein bS6.

In terms of biological role, binds as a heterodimer with protein bS6 to the central domain of the 16S rRNA, where it helps stabilize the platform of the 30S subunit. The polypeptide is Small ribosomal subunit protein bS18 (Mycoplasma capricolum subsp. capricolum (strain California kid / ATCC 27343 / NCTC 10154)).